Consider the following 431-residue polypeptide: Bone morphogenetic protein 7 (431 aa).

Residues 1–29 form the signal peptide; that stretch reads MHVRSLRAAAPHSFVALWAPLFLLRSALA. Positions 30–292 are excised as a propeptide; sequence DFSLDNEVHS…ATEVHFRSIR (263 aa). Residues asparagine 187, asparagine 302, asparagine 321, and asparagine 372 are each glycosylated (N-linked (GlcNAc...) asparagine). The segment at 291-311 is disordered; that stretch reads IRSTGSKQRSQNRSKTPKNQE. 3 cysteine pairs are disulfide-bonded: cysteine 330-cysteine 396, cysteine 359-cysteine 428, and cysteine 363-cysteine 430.

The protein belongs to the TGF-beta family. As to quaternary structure, homodimer; disulfide-linked. Interacts with SOSTDC1. Interacts with TWSG1. Interacts with FBN1 (via N-terminal domain) and FBN2. Interacts with type I receptor ACVR1. Interacts with type II receptor ACVR2A. Interacts with NOG; this interaction inhibits canonical BMP signaling. Interacts with SCUBE3. Interacts with ERFE; the interaction inhibits BMP-induced transcription of HAMP. Interacts with TGFBR3. Several N-termini starting at positions 293, 300, 315 and 316 have been identified by direct sequencing resulting in secretion of different mature forms. As to expression, expressed in the kidney and bladder. Lower levels seen in the brain.

It is found in the secreted. Functionally, growth factor of the TGF-beta superfamily that plays important role in various biological processes, including embryogenesis, hematopoiesis, neurogenesis and skeletal morphogenesis. Initiates the canonical BMP signaling cascade by associating with type I receptor ACVR1 and type II receptor ACVR2A. Once all three components are bound together in a complex at the cell surface, ACVR2A phosphorylates and activates ACVR1. In turn, ACVR1 propagates signal by phosphorylating SMAD1/5/8 that travel to the nucleus and act as activators and repressors of transcription of target genes. For specific functions such as growth cone collapse in developing spinal neurons and chemotaxis of monocytes, also uses BMPR2 as type II receptor. Can also signal through non-canonical pathways such as P38 MAP kinase signaling cascade that promotes brown adipocyte differentiation through activation of target genes, including members of the SOX family of transcription factors. Promotes the expression of HAMP, this is repressed by its interaction with ERFE. This chain is Bone morphogenetic protein 7 (BMP7), found in Homo sapiens (Human).